We begin with the raw amino-acid sequence, 46 residues long: Sperm protamine P1 (46 aa).

Belongs to the protamine P1 family. As to expression, testis.

The protein localises to the nucleus. It is found in the chromosome. In terms of biological role, protamines substitute for histones in the chromatin of sperm during the haploid phase of spermatogenesis. They compact sperm DNA into a highly condensed, stable and inactive complex. The protein is Sperm protamine P1 (PRM1) of Hypsugo savii (Savi's pipistrelle).